A 289-amino-acid polypeptide reads, in one-letter code: (+)-kolavelool synthase (289 aa).

The protein belongs to the diterpene synthase family.

It catalyses the reaction (+)-kolavenyl diphosphate + H2O = (+)-kolavelool + diphosphate. Functionally, involved in the biosynthesis of (+)-O-methylkolavelool. Catalyzes the biosynthesis of (+)-kolavelool from (+)-kolavenyl diphosphate via the release of the diphosphate moiety through the nucleophilic addition of a water molecule. The chain is (+)-kolavelool synthase from Herpetosiphon aurantiacus (strain ATCC 23779 / DSM 785 / 114-95).